Reading from the N-terminus, the 100-residue chain is Small ribosomal subunit protein uS14m (100 aa).

Belongs to the universal ribosomal protein uS14 family.

The protein resides in the mitochondrion. The polypeptide is Small ribosomal subunit protein uS14m (RPS14) (Brassica napus (Rape)).